Reading from the N-terminus, the 188-residue chain is Large ribosomal subunit protein eL18 (188 aa).

This sequence belongs to the eukaryotic ribosomal protein eL18 family.

The protein resides in the cytoplasm. In Drosophila melanogaster (Fruit fly), this protein is Large ribosomal subunit protein eL18 (RpL18).